A 1328-amino-acid chain; its full sequence is Tubulin polyglutamylase TTLL5 (1328 aa).

Positions 1-22 (MPVVMARDLEETASSSEDEDLA) are disordered. The region spanning 62–407 (RYHLSYKIVR…VCQDPAQRTS (346 aa)) is the TTL domain. Residues Lys-180, 186-187 (RG), 208-211 (SRYI), and 221-223 (KFD) each bind ATP. Residue Arg-186 coordinates a protein. Arg-247 provides a ligand contact to L-glutamate. 268–269 (TN) is an ATP binding site. 3 residues coordinate L-glutamate: Tyr-270, Ser-271, and Lys-293. Mg(2+)-binding residues include Asp-353, Glu-366, and Asn-368. The segment at 378-488 (PLDLKIKASM…RGGFIRIFPT (111 aa)) is c-MTBD region. Position 384 (Lys-384) interacts with L-glutamate. Disordered stretches follow at residues 411 to 436 (IYPS…SASD), 585 to 631 (AQPA…QAKY), 834 to 853 (HSKS…KGDH), 948 to 975 (PALL…PAGL), 1006 to 1032 (SSAK…EGED), 1085 to 1129 (RSSA…LQTG), and 1212 to 1271 (RISS…QLNG). The span at 420–432 (RNPFQKPQRTRPL) shows a compositional bias: polar residues. Positions 597 to 617 (ESEEEEEVGLDNDDEEQEASQ) are enriched in acidic residues. Positions 838–847 (SKNSSSYSDS) are enriched in low complexity. 4 stretches are compositionally biased toward polar residues: residues 1116 to 1128 (THSS…SLQT), 1214 to 1227 (SSAT…NTLP), 1234 to 1248 (PNSS…SNHK), and 1257 to 1271 (QRAS…QLNG).

This sequence belongs to the tubulin--tyrosine ligase family. Interacts with the transcriptional coactivators NCOA1/SRC-1 and NCOA2/TIF2. Requires Mg(2+) as cofactor. Highly expressed in brain, kidney, liver, spleen and testis. Expressed in heart, lung, muscle and trachea.

Its subcellular location is the cell projection. The protein resides in the cilium. It is found in the cytoplasm. The protein localises to the cytoskeleton. It localises to the cilium basal body. Its subcellular location is the nucleus. It carries out the reaction L-glutamyl-[protein] + L-glutamate + ATP = gamma-L-glutamyl-L-glutamyl-[protein] + ADP + phosphate + H(+). The catalysed reaction is (L-glutamyl)(n)-gamma-L-glutamyl-L-glutamyl-[protein] + L-glutamate + ATP = (L-glutamyl)(n+1)-gamma-L-glutamyl-L-glutamyl-[protein] + ADP + phosphate + H(+). Functionally, polyglutamylase which modifies tubulin, generating polyglutamate side chains on the gamma-carboxyl group of specific glutamate residues within the C-terminal tail of tubulin. Preferentially mediates ATP-dependent initiation step of the polyglutamylation reaction over the elongation step. Preferentially modifies the alpha-tubulin tail over a beta-tail. Required for CCSAP localization to both polyglutamylated spindle and cilia microtubules. Increases the effects of transcriptional coactivator NCOA2/TIF2 in glucocorticoid receptor-mediated repression and induction and in androgen receptor-mediated induction. The protein is Tubulin polyglutamylase TTLL5 of Mus musculus (Mouse).